The following is a 418-amino-acid chain: D-inositol 3-phosphate glycosyltransferase 1 (418 aa).

UDP-N-acetyl-alpha-D-glucosamine-binding positions include Q24 to P25 and G32. Residues D29–N34, K87, H115, S139, and Q159 contribute to the 1D-myo-inositol 3-phosphate site. 2 residues coordinate UDP-N-acetyl-alpha-D-glucosamine: R233 and K238. Mg(2+)-binding residues include Y308, R309, and A311. UDP-N-acetyl-alpha-D-glucosamine is bound by residues E321 and E329. A Mg(2+)-binding site is contributed by T335.

The protein belongs to the glycosyltransferase group 1 family. MshA subfamily. As to quaternary structure, homodimer.

The catalysed reaction is 1D-myo-inositol 3-phosphate + UDP-N-acetyl-alpha-D-glucosamine = 1D-myo-inositol 2-acetamido-2-deoxy-alpha-D-glucopyranoside 3-phosphate + UDP + H(+). Its function is as follows. Catalyzes the transfer of a N-acetyl-glucosamine moiety to 1D-myo-inositol 3-phosphate to produce 1D-myo-inositol 2-acetamido-2-deoxy-glucopyranoside 3-phosphate in the mycothiol biosynthesis pathway. The protein is D-inositol 3-phosphate glycosyltransferase 1 of Catenulispora acidiphila (strain DSM 44928 / JCM 14897 / NBRC 102108 / NRRL B-24433 / ID139908).